A 109-amino-acid chain; its full sequence is Large ribosomal subunit protein uL22 (109 aa).

The protein belongs to the universal ribosomal protein uL22 family. As to quaternary structure, part of the 50S ribosomal subunit.

In terms of biological role, this protein binds specifically to 23S rRNA; its binding is stimulated by other ribosomal proteins, e.g. L4, L17, and L20. It is important during the early stages of 50S assembly. It makes multiple contacts with different domains of the 23S rRNA in the assembled 50S subunit and ribosome. Its function is as follows. The globular domain of the protein is located near the polypeptide exit tunnel on the outside of the subunit, while an extended beta-hairpin is found that lines the wall of the exit tunnel in the center of the 70S ribosome. The polypeptide is Large ribosomal subunit protein uL22 (Psychrobacter cryohalolentis (strain ATCC BAA-1226 / DSM 17306 / VKM B-2378 / K5)).